The chain runs to 102 residues: Acid shock protein (102 aa).

The signal sequence occupies residues 1–21 (MKKVLALVVAAAMGLSSAAFA). Positions 22 to 41 (AETATTPAPTATTTKAAPAK) are enriched in low complexity. Residues 22–58 (AETATTPAPTATTTKAAPAKTTHHKKQHKAAPAQKAQ) constitute a propeptide that is removed on maturation. The interval 22–102 (AETATTPAPT…PAKPAAQPAA (81 aa)) is disordered. Over residues 80–90 (AAKKHAKKHSH) the composition is skewed to basic residues. The segment covering 91 to 102 (QQPAKPAAQPAA) has biased composition (low complexity).

Belongs to the Asr family. Proteolytic processing gives rise to the active protein.

It is found in the periplasm. Its function is as follows. Required for growth and/or survival at acidic conditions. This chain is Acid shock protein (asr), found in Escherichia coli O157:H7.